Consider the following 315-residue polypeptide: Homoserine kinase (315 aa).

97 to 107 is an ATP binding site; sequence PPARGLGSSAT.

Belongs to the GHMP kinase family. Homoserine kinase subfamily.

It localises to the cytoplasm. It carries out the reaction L-homoserine + ATP = O-phospho-L-homoserine + ADP + H(+). It participates in amino-acid biosynthesis; L-threonine biosynthesis; L-threonine from L-aspartate: step 4/5. Its function is as follows. Catalyzes the ATP-dependent phosphorylation of L-homoserine to L-homoserine phosphate. The protein is Homoserine kinase of Prochlorococcus marinus subsp. pastoris (strain CCMP1986 / NIES-2087 / MED4).